The sequence spans 428 residues: 3-phosphoshikimate 1-carboxyvinyltransferase (428 aa).

Positions 23, 24, and 28 each coordinate 3-phosphoshikimate. Lys23 is a binding site for phosphoenolpyruvate. The phosphoenolpyruvate site is built by Gly97 and Arg125. Residues Ser170, Ser171, Gln172, Ser198, Asp314, Asn337, and Lys341 each coordinate 3-phosphoshikimate. Gln172 provides a ligand contact to phosphoenolpyruvate. Asp314 (proton acceptor) is an active-site residue. Residues Arg345, Arg387, and Lys412 each contribute to the phosphoenolpyruvate site.

Belongs to the EPSP synthase family. In terms of assembly, monomer.

Its subcellular location is the cytoplasm. It carries out the reaction 3-phosphoshikimate + phosphoenolpyruvate = 5-O-(1-carboxyvinyl)-3-phosphoshikimate + phosphate. It participates in metabolic intermediate biosynthesis; chorismate biosynthesis; chorismate from D-erythrose 4-phosphate and phosphoenolpyruvate: step 6/7. Functionally, catalyzes the transfer of the enolpyruvyl moiety of phosphoenolpyruvate (PEP) to the 5-hydroxyl of shikimate-3-phosphate (S3P) to produce enolpyruvyl shikimate-3-phosphate and inorganic phosphate. This Yersinia pseudotuberculosis serotype IB (strain PB1/+) protein is 3-phosphoshikimate 1-carboxyvinyltransferase.